The following is a 1183-amino-acid chain: Polyphosphatidylinositol phosphatase INP52 (1183 aa).

The segment covering 133-153 (PPSISTHSSRSSLRSSSSRSL) has biased composition (low complexity). The segment at 133-161 (PPSISTHSSRSSLRSSSSRSLNAQEQAPK) is disordered. Position 152 is a phosphoserine (Ser152). In terms of domain architecture, SAC spans 167 to 507 (LRKLLSNGSF…GDQISQIYTG (341 aa)). Residue Ser522 is modified to Phosphoserine. Residues 955–968 (SPLLSGPSPQPSVV) are compositionally biased toward low complexity. Residues 955–1183 (SPLLSGPSPQ…VHPLKPCDPN (229 aa)) are disordered. Ser1005 and Ser1016 each carry phosphoserine. Thr1032 carries the phosphothreonine modification. Polar residues-rich tracts occupy residues 1046 to 1057 (KPVSLQKSSSEL), 1082 to 1100 (STAPDEISTSTKNSGVSTT), and 1130 to 1145 (KLNTSQEHSIKVSPSN). Ser1095 is subject to Phosphoserine.

It belongs to the synaptojanin family. In the central section; belongs to the inositol 1,4,5-trisphosphate 5-phosphatase family. Interacts (via SAC domain) with BSP1; the interaction is direct. Interacts with ABP1.

Its subcellular location is the cytoplasm. The protein localises to the cytoskeleton. It is found in the actin patch. The enzyme catalyses a 1,2-diacyl-sn-glycero-3-phospho-(1D-myo-inositol-4,5-bisphosphate) + H2O = a 1,2-diacyl-sn-glycero-3-phospho-(1D-myo-inositol 4-phosphate) + phosphate. Functionally, dephosphorylates a number of phosphatidylinositols (PIs) like phosphatidylinositol 4,5-bisphosphate (PtdIns(4,5)P2), but also phosphatidylinositol 3-phosphate (PtdIns(3)P), phosphatidylinositol 4-phosphate (PtdIns(4)P), and phosphatidylinositol 3,5-bisphosphate (PtdIns(3,5)P2). Controls the cellular levels and subcellular distribution of phosphatidylinositol 3-phosphate and phosphatidylinositol 4,5-bisphosphate. Specifically functions within the early endocytic pathway and actin organization. The polypeptide is Polyphosphatidylinositol phosphatase INP52 (Saccharomyces cerevisiae (strain ATCC 204508 / S288c) (Baker's yeast)).